The following is a 670-amino-acid chain: DNA ligase (670 aa).

Residues 32-36 (DSEYD), 81-82 (SL), and Glu-114 each bind NAD(+). Catalysis depends on Lys-116, which acts as the N6-AMP-lysine intermediate. Arg-137, Glu-174, Lys-291, and Lys-315 together coordinate NAD(+). Zn(2+) is bound by residues Cys-409, Cys-412, Cys-427, and Cys-433. Residues 592 to 670 (ASENLFKDKT…EEEFLAQITR (79 aa)) form the BRCT domain.

The protein belongs to the NAD-dependent DNA ligase family. LigA subfamily. The cofactor is Mg(2+). It depends on Mn(2+) as a cofactor.

The enzyme catalyses NAD(+) + (deoxyribonucleotide)n-3'-hydroxyl + 5'-phospho-(deoxyribonucleotide)m = (deoxyribonucleotide)n+m + AMP + beta-nicotinamide D-nucleotide.. Functionally, DNA ligase that catalyzes the formation of phosphodiester linkages between 5'-phosphoryl and 3'-hydroxyl groups in double-stranded DNA using NAD as a coenzyme and as the energy source for the reaction. It is essential for DNA replication and repair of damaged DNA. This is DNA ligase from Haemophilus influenzae (strain PittGG).